Consider the following 549-residue polypeptide: Probable glucuronosyltransferase Os01g0157700 (549 aa).

At 1-16 (MDSEERSKKRLRLWSR) the chain is on the cytoplasmic side. The chain crosses the membrane as a helical; Signal-anchor for type II membrane protein span at residues 17-37 (AVVHFSLCFAIGVFAALLPLA). Residues 38–549 (ATGATSIDSI…TPEEGKTKEG (512 aa)) are Lumenal-facing. Residues N112, N139, N214, N229, N240, N251, N264, N269, and N300 are each glycosylated (N-linked (GlcNAc...) asparagine). The interval 232–252 (ETTWDSSSNTTQTTWDSSSNK) is disordered. Residues 350–363 (IEQATPEKESLTKG) are compositionally biased toward basic and acidic residues. 3 disordered regions span residues 350–371 (IEQA…SHDM), 413–432 (EQET…ESHD), and 441–524 (KIEE…KETH). N-linked (GlcNAc...) asparagine glycans are attached at residues N421 and N452. Composition is skewed to basic and acidic residues over residues 441–465 (KIEE…HDMM), 472–496 (KIDE…HDMM), and 503–524 (KIEE…KETH).

Belongs to the glycosyltransferase 43 family.

Its subcellular location is the golgi apparatus membrane. Functionally, involved in the synthesis of glucuronoxylan hemicellulose in secondary cell walls. This chain is Probable glucuronosyltransferase Os01g0157700, found in Oryza sativa subsp. japonica (Rice).